Reading from the N-terminus, the 368-residue chain is MMKSEWNEEQIKELLSQLPAVKDHRSPQDIYKRLTMAKRKNKPAVRWIGPACAAAIAVYIAFIISPHFFDQAQPQQKEASQENAVTKTETEDSPKAASSLDQTSFVVPEKEQDNYITVAVADADTSAIIPVSIQKTNADQTIQDMLFESSELGILDHAITIPTFIDEVEIKEKPKQKELSIRVHQPATAFSIKDDTLLKKLLKESLKWSPYEKVKFLSDQNETGVRIGSYGTFTEISIPKQSKRSYYLYQNKQGQDFLVPSNHSFDTVKEAIKEMESSSQEDTTPLIQAGAVQSVTKKQKHLYIRFSKESEVDDSIAGILMIEGLLLTAKEFGFTEVTFTETRTKKIGKYDISDAIPVPAAPNPISLN.

Positions 73–87 (QPQQKEASQENAVTK) are enriched in polar residues. The segment at 73–101 (QPQQKEASQENAVTKTETEDSPKAASSLD) is disordered.

It localises to the cell membrane. Its function is as follows. The anti-sigma factor for extracytoplasmic function (ECF) sigma factor SigX, inhibits SigX activity and stabilizes it. In Bacillus subtilis (strain 168), this protein is Anti-sigma-X factor RsiX (rsiX).